The sequence spans 352 residues: Cellular tumor antigen p53 (352 aa).

The transcription activation (acidic) stretch occupies residues 1–48 (MDPVPDLPESQGSFQELWETVSYPPLETLSLPTVNEPTGSWVATGDMF). Residues 87–273 (DYPGSYELEL…KTEEESRQKT (187 aa)) mediate DNA binding. Zn(2+) contacts are provided by Cys-161, His-164, Cys-220, and Cys-224. Residues 254–261 (RICACPGR) form an interaction with DNA region. The span at 262–271 (DRKTEEESRQ) shows a compositional bias: basic and acidic residues. The segment at 262 to 303 (DRKTEEESRQKTQPKKRKVTPNTSSSKRKKSHSSGEEEDNRE) is disordered. The short motif at 276–291 (KKRKVTPNTSSSKRKK) is the Bipartite nuclear localization signal element. The segment at 302–331 (REVFHFEVYGRERYEFLKKINDGLELLEKE) is oligomerization. The Nuclear export signal motif lies at 316–327 (EFLKKINDGLEL). A disordered region spans residues 330–352 (KESKSKNKDSGMVPSSGKKLKSN). Residues 334–350 (SKNKDSGMVPSSGKKLK) form a basic (repression of DNA-binding) region. A Phosphoserine modification is found at Ser-351.

Belongs to the p53 family. As to quaternary structure, binds DNA as a homotetramer. It depends on Zn(2+) as a cofactor.

It is found in the cytoplasm. It localises to the nucleus. Functionally, multifunctional transcription factor that induces cell cycle arrest, DNA repair or apoptosis upon binding to its target DNA sequence. Acts as a tumor suppressor in many tumor types; induces growth arrest or apoptosis depending on the physiological circumstances and cell type. Negatively regulates cell division by controlling expression of a set of genes required for this process. One of the activated genes is an inhibitor of cyclin-dependent kinases. Apoptosis induction seems to be mediated either by stimulation of BAX and FAS antigen expression, or by repression of Bcl-2 expression. This chain is Cellular tumor antigen p53 (tp53), found in Oryzias latipes (Japanese rice fish).